We begin with the raw amino-acid sequence, 447 residues long: MKLFGTSGIRMKNLDPLIAYKVGYAISKNFKKAVIGRDTRTTGNLIESAITAGLLNGGCDVTTIGMVPTPVLGYSAKDYDLGIMITASHNPPEYNGIKLFNKNGTAFDPKQEKELENIINNDDFNEGTWDNIGCVIEDKTAVKNYSEYILQNLDIKTNFNVVVDCANAAGCVVSPNIFTEAGCKVISVNSHCDGRFVGRMPEPNEKNLKETVDIIKGLNSNCRNYIGIAHDGDADRMIAIDELGRVTDFDKLLAAFCKYIVQKTGADKIVTTVDASMAIDEYLNEFGAEVVRTKIGDVAVAEELEKTGAIFGGEPSGTWIHRDIHLTPDGILSGLRVLEMMEFYDKKLHEIIDEVPSYYNMREKILCPDNLKQQVMDYVSKEGEKIFEKKPETLDGVRFSFEKGWILIRPSGTESYVRVRVEAKEKDFAEKLMKTGISMVYTGISGN.

The active-site Phosphoserine intermediate is Ser-88. Ser-88, Asp-231, Asp-233, and Asp-235 together coordinate Mg(2+). Ser-88 carries the post-translational modification Phosphoserine.

Belongs to the phosphohexose mutase family. Mg(2+) is required as a cofactor. Activated by phosphorylation.

It catalyses the reaction alpha-D-glucosamine 1-phosphate = D-glucosamine 6-phosphate. Catalyzes the conversion of glucosamine-6-phosphate to glucosamine-1-phosphate. The polypeptide is Phosphoglucosamine mutase (Methanococcus maripaludis (strain C5 / ATCC BAA-1333)).